Here is a 332-residue protein sequence, read N- to C-terminus: Fructose-1,6-bisphosphatase class 1 (332 aa).

Residues Glu89, Asp110, Leu112, and Asp113 each contribute to the Mg(2+) site. Substrate is bound by residues 113 to 116, Asn206, Tyr239, 257 to 259, and Lys269; these read DGSS and YLY. Glu275 is a binding site for Mg(2+).

It belongs to the FBPase class 1 family. In terms of assembly, homotetramer. The cofactor is Mg(2+).

The protein localises to the cytoplasm. It carries out the reaction beta-D-fructose 1,6-bisphosphate + H2O = beta-D-fructose 6-phosphate + phosphate. It participates in carbohydrate biosynthesis; gluconeogenesis. The protein is Fructose-1,6-bisphosphatase class 1 of Salmonella typhimurium (strain LT2 / SGSC1412 / ATCC 700720).